The chain runs to 519 residues: Steroid 17-alpha-hydroxylase/17,20 lyase (519 aa).

Cys455 serves as a coordination point for heme.

This sequence belongs to the cytochrome P450 family. Requires heme as cofactor.

Its subcellular location is the membrane. The enzyme catalyses a C21-steroid + reduced [NADPH--hemoprotein reductase] + O2 = a 17alpha-hydroxy-C21-steroid + oxidized [NADPH--hemoprotein reductase] + H2O + H(+). The catalysed reaction is 17alpha-hydroxyprogesterone + reduced [NADPH--hemoprotein reductase] + O2 = androst-4-ene-3,17-dione + acetate + oxidized [NADPH--hemoprotein reductase] + H2O + 2 H(+). It catalyses the reaction 17alpha-hydroxypregnenolone + reduced [NADPH--hemoprotein reductase] + O2 = 3beta-hydroxyandrost-5-en-17-one + acetate + oxidized [NADPH--hemoprotein reductase] + H2O + 2 H(+). The protein operates within lipid metabolism; steroid biosynthesis. In terms of biological role, conversion of pregnenolone and progesterone to their 17-alpha-hydroxylated products and subsequently to dehydroepiandrosterone (DHEA) and androstenedione. Catalyzes both the 17-alpha-hydroxylation and the 17,20-lyase reaction. The protein is Steroid 17-alpha-hydroxylase/17,20 lyase (CYP17A1) of Rana dybowskii (Dybovsky's frog).